Reading from the N-terminus, the 301-residue chain is Securin (301 aa).

Disordered regions lie at residues 1–55 (MLPR…RTVL), 82–120 (DSPT…DTPL), and 218–284 (ASDQ…RSIH). Positions 33-36 (RAPL) match the D-box 1 motif. Residues 38 to 50 (STKQSNAPSSVTV) show a composition bias toward polar residues. The D-box 2 signature appears at 52–55 (RTVL). Composition is skewed to polar residues over residues 88 to 98 (EPNSQGISRSA), 110 to 119 (PRRSSLTDTP), and 231 to 245 (VSKQ…STVY). 2 repeats span residues 250–260 (ASGKSIPRPLS) and 270–280 (ASGNSRRRPLS).

The protein belongs to the securin family. In terms of assembly, interacts with the caspase-like cut1, and prevents its protease activity probably by covering its active site. Ubiquitinated by the anaphase promoting complex (APC) at the onset of anaphase, conducting to its degradation.

It is found in the cytoplasm. The protein resides in the nucleus. Its function is as follows. Regulatory protein, which plays a central role in chromosome stability. Probably acts by blocking the action of key proteins. During the mitosis, it blocks separase/cut1 function, preventing the proteolysis of the cohesin complex and the subsequent segregation of the chromosomes. At the onset of anaphase, it is ubiquitinated, conducting to its destruction and to the liberation of cut1. In Schizosaccharomyces pombe (strain 972 / ATCC 24843) (Fission yeast), this protein is Securin (cut2).